A 620-amino-acid polypeptide reads, in one-letter code: 1-deoxy-D-xylulose-5-phosphate synthase (620 aa).

Thiamine diphosphate-binding positions include histidine 80 and 121-123 (GHS). Aspartate 152 contacts Mg(2+). Thiamine diphosphate-binding positions include 153 to 154 (GA), asparagine 181, tyrosine 288, and glutamate 370. A Mg(2+)-binding site is contributed by asparagine 181.

It belongs to the transketolase family. DXPS subfamily. Homodimer. Mg(2+) serves as cofactor. It depends on thiamine diphosphate as a cofactor.

The catalysed reaction is D-glyceraldehyde 3-phosphate + pyruvate + H(+) = 1-deoxy-D-xylulose 5-phosphate + CO2. It functions in the pathway metabolic intermediate biosynthesis; 1-deoxy-D-xylulose 5-phosphate biosynthesis; 1-deoxy-D-xylulose 5-phosphate from D-glyceraldehyde 3-phosphate and pyruvate: step 1/1. Its function is as follows. Catalyzes the acyloin condensation reaction between C atoms 2 and 3 of pyruvate and glyceraldehyde 3-phosphate to yield 1-deoxy-D-xylulose-5-phosphate (DXP). The polypeptide is 1-deoxy-D-xylulose-5-phosphate synthase (Photobacterium profundum (strain SS9)).